The chain runs to 394 residues: RILP-like protein 1 (394 aa).

An RH1 domain is found at 2 to 89 (EGISALEKNV…RLERMDRIEK (88 aa)). Residues 68 to 312 (EMEELRLELD…KVFMLQEELA (245 aa)) adopt a coiled-coil conformation. The 66-residue stretch at 282–347 (RPRFTLQELR…IPQESGIKRL (66 aa)) folds into the RH2 domain. The disordered stretch occupies residues 318-337 (EADEEHKLPQSSPVIDSKAP).

The protein belongs to the RILPL family.

The protein resides in the cytoplasm. It localises to the cytosol. It is found in the cytoskeleton. Its subcellular location is the microtubule organizing center. The protein localises to the centrosome. The protein resides in the cell projection. It localises to the cilium. Plays a role in the regulation of cell shape and polarity. Plays a role in cellular protein transport, including protein transport away from primary cilia. Neuroprotective protein. This chain is RILP-like protein 1 (rilpl1), found in Xenopus tropicalis (Western clawed frog).